A 226-amino-acid polypeptide reads, in one-letter code: Ribonuclease HII (226 aa).

The RNase H type-2 domain occupies 24–216; the sequence is QRLCGVDEAG…VRKVLERGMV (193 aa). The a divalent metal cation site is built by aspartate 30, glutamate 31, and aspartate 125.

It belongs to the RNase HII family. Mn(2+) serves as cofactor. The cofactor is Mg(2+).

The protein resides in the cytoplasm. It catalyses the reaction Endonucleolytic cleavage to 5'-phosphomonoester.. Endonuclease that specifically degrades the RNA of RNA-DNA hybrids. The chain is Ribonuclease HII from Cupriavidus metallidurans (strain ATCC 43123 / DSM 2839 / NBRC 102507 / CH34) (Ralstonia metallidurans).